The primary structure comprises 228 residues: MLHNVSKGVVYSDTALKGQDGDREGMWVGAGGALAPNTSSLFPPEPPGASSNIIPVYCALLATVVLGLLAYVAFKCWRSRKQRQQLAKARTVELGDPDRDQRHGDSSVFVDSPHGLEPCIPSQGPHADLGCRLYLHIPQQQQEEVQRLLILGEPAKGWQGLAGQLGYQAEAVETMACDQDPAYALLRDWAAQEGSGATLRVLEDALTAIGREDVVQVLSSPAEGCSVV.

Over 1–52 (MLHNVSKGVVYSDTALKGQDGDREGMWVGAGGALAPNTSSLFPPEPPGASSN) the chain is Extracellular. N-linked (GlcNAc...) asparagine glycans are attached at residues Asn-4 and Asn-37. The helical; Signal-anchor for type III membrane protein transmembrane segment at 53–73 (IIPVYCALLATVVLGLLAYVA) threads the bilayer. The Cytoplasmic portion of the chain corresponds to 74–228 (FKCWRSRKQR…SSPAEGCSVV (155 aa)). Residues 143-222 (EEVQRLLILG…DVVQVLSSPA (80 aa)) form the Death domain.

Interacts with NTRK1. Isoform 1 and isoform 2 interact with NGFR. Interacts with SORT1. Post-translationally, isoform 1 is N-glycosylated. Isoform 2 is not N-glycosylated. As to expression, detected in embryo, including embryonic brain. Detected at very low levels in adult testis, spleen, thymus and lung.

Its subcellular location is the cell membrane. The protein localises to the nucleus. Its function is as follows. Modulates NTRK1 signaling. Can activate several intracellular signaling pathways, leading to activation of JUN. Promotes translocation of SORT1 to the cell membrane, and thereby hinders lysosomal degradation of SOTR1 and promotes its interaction with NGFR. Both isoform 1 and isoform 2 promote apoptosis. The polypeptide is Death domain-containing membrane protein NRADD (Nradd) (Rattus norvegicus (Rat)).